Consider the following 734-residue polypeptide: Photosystem I P700 chlorophyll a apoprotein A2 (734 aa).

Transmembrane regions (helical) follow at residues 46 to 69 (IFAS…FHVA), 135 to 158 (LYTG…LHLQ), 175 to 199 (LNHH…HVAI), 273 to 291 (IAHH…GHMY), 330 to 353 (IHFQ…QHMY), 369 to 395 (AALY…IFFI), 417 to 439 (AIKS…LYVH), and 517 to 535 (FLVH…LILV). The [4Fe-4S] cluster site is built by C559 and C568. The next 2 helical transmembrane spans lie at 575–596 (AFYL…YWHW) and 643–665 (LSVW…MFLI). Chlorophyll a-binding residues include H654, M662, and Y670. Residue W671 participates in phylloquinone binding. Residues 707-727 (LVGLAHFSVGYIFTYAAFLIA) form a helical membrane-spanning segment.

It belongs to the PsaA/PsaB family. As to quaternary structure, the PsaA/B heterodimer binds the P700 chlorophyll special pair and subsequent electron acceptors. PSI consists of a core antenna complex that captures photons, and an electron transfer chain that converts photonic excitation into a charge separation. The eukaryotic PSI reaction center is composed of at least 11 subunits. P700 is a chlorophyll a/chlorophyll a' dimer, A0 is one or more chlorophyll a, A1 is one or both phylloquinones and FX is a shared 4Fe-4S iron-sulfur center. is required as a cofactor.

The protein resides in the plastid. Its subcellular location is the chloroplast thylakoid membrane. The enzyme catalyses reduced [plastocyanin] + hnu + oxidized [2Fe-2S]-[ferredoxin] = oxidized [plastocyanin] + reduced [2Fe-2S]-[ferredoxin]. Its function is as follows. PsaA and PsaB bind P700, the primary electron donor of photosystem I (PSI), as well as the electron acceptors A0, A1 and FX. PSI is a plastocyanin-ferredoxin oxidoreductase, converting photonic excitation into a charge separation, which transfers an electron from the donor P700 chlorophyll pair to the spectroscopically characterized acceptors A0, A1, FX, FA and FB in turn. Oxidized P700 is reduced on the lumenal side of the thylakoid membrane by plastocyanin. The chain is Photosystem I P700 chlorophyll a apoprotein A2 from Illicium oligandrum (Star anise).